A 314-amino-acid polypeptide reads, in one-letter code: Lipoyl synthase (314 aa).

Positions 55, 60, 66, 81, 85, 88, and 292 each coordinate [4Fe-4S] cluster. The region spanning 67–281 (WEDREATFLI…TQYAEGLGFS (215 aa)) is the Radical SAM core domain.

It belongs to the radical SAM superfamily. Lipoyl synthase family. [4Fe-4S] cluster serves as cofactor.

The protein resides in the cytoplasm. It carries out the reaction [[Fe-S] cluster scaffold protein carrying a second [4Fe-4S](2+) cluster] + N(6)-octanoyl-L-lysyl-[protein] + 2 oxidized [2Fe-2S]-[ferredoxin] + 2 S-adenosyl-L-methionine + 4 H(+) = [[Fe-S] cluster scaffold protein] + N(6)-[(R)-dihydrolipoyl]-L-lysyl-[protein] + 4 Fe(3+) + 2 hydrogen sulfide + 2 5'-deoxyadenosine + 2 L-methionine + 2 reduced [2Fe-2S]-[ferredoxin]. It functions in the pathway protein modification; protein lipoylation via endogenous pathway; protein N(6)-(lipoyl)lysine from octanoyl-[acyl-carrier-protein]: step 2/2. Catalyzes the radical-mediated insertion of two sulfur atoms into the C-6 and C-8 positions of the octanoyl moiety bound to the lipoyl domains of lipoate-dependent enzymes, thereby converting the octanoylated domains into lipoylated derivatives. This Mycobacterium leprae (strain Br4923) protein is Lipoyl synthase.